The sequence spans 411 residues: Tyrosine--tRNA ligase (411 aa).

Residue Tyr36 coordinates L-tyrosine. The short motif at 41-50 (PTADSLHVGH) is the 'HIGH' region element. The L-tyrosine site is built by Tyr172 and Gln176. A 'KMSKS' region motif is present at residues 232–236 (KMGKT). Lys235 serves as a coordination point for ATP. Positions 344–409 (YSIANILVVT…GKKNHIKVII (66 aa)) constitute an S4 RNA-binding domain.

The protein belongs to the class-I aminoacyl-tRNA synthetase family. TyrS type 1 subfamily. Homodimer.

It is found in the cytoplasm. The enzyme catalyses tRNA(Tyr) + L-tyrosine + ATP = L-tyrosyl-tRNA(Tyr) + AMP + diphosphate + H(+). Catalyzes the attachment of tyrosine to tRNA(Tyr) in a two-step reaction: tyrosine is first activated by ATP to form Tyr-AMP and then transferred to the acceptor end of tRNA(Tyr). This chain is Tyrosine--tRNA ligase, found in Malacoplasma penetrans (strain HF-2) (Mycoplasma penetrans).